The chain runs to 110 residues: U9-agatoxin-Ao1a (110 aa).

An N-terminal signal peptide occupies residues 1-17 (MKLLLAIAGLFLVQTLA). A propeptide spanning residues 18–38 (EDVRAHEESSFLAAVAPEEQR) is cleaved from the precursor. 5 disulfide bridges follow: cysteine 40-cysteine 54, cysteine 47-cysteine 60, cysteine 51-cysteine 87, cysteine 53-cysteine 72, and cysteine 62-cysteine 70.

This sequence belongs to the neurotoxin 37 family. In terms of tissue distribution, expressed by the venom gland.

The protein resides in the secreted. The chain is U9-agatoxin-Ao1a from Agelena orientalis (Funnel-web spider).